A 420-amino-acid chain; its full sequence is Mitogen-activated protein kinase HOG2 (420 aa).

ATP is bound by residues 29–37 (VGMGAFGLV) and lysine 52. Catalysis depends on aspartate 144, which acts as the Proton acceptor. Position 174 is a phosphothreonine (threonine 174). The short motif at 174–176 (TGY) is the TXY element. Tyrosine 176 is modified (phosphotyrosine). The disordered stretch occupies residues 372 to 394 (AQHHHQTQQQSSGKHTNPTTSSS).

Belongs to the protein kinase superfamily. Ser/Thr protein kinase family. MAP kinase subfamily. HOG1 sub-subfamily. Requires Mg(2+) as cofactor. Dually phosphorylated on Thr-174 and Tyr-176, which activates the enzyme.

It localises to the cytoplasm. The protein localises to the nucleus. The catalysed reaction is L-seryl-[protein] + ATP = O-phospho-L-seryl-[protein] + ADP + H(+). It catalyses the reaction L-threonyl-[protein] + ATP = O-phospho-L-threonyl-[protein] + ADP + H(+). With respect to regulation, activated by tyrosine and threonine phosphorylation. Mitogen-activated protein kinase involved in a signal transduction pathway that is activated by changes in the osmolarity of the extracellular environment. Controls osmotic regulation of transcription of target genes. This chain is Mitogen-activated protein kinase HOG2 (HOG2), found in Zygosaccharomyces rouxii.